The following is a 599-amino-acid chain: NADH-quinone oxidoreductase subunit C/D (599 aa).

Residues Met1–Glu189 form an NADH dehydrogenase I subunit C region. Residues Asp213–Arg599 are NADH dehydrogenase I subunit D.

This sequence in the N-terminal section; belongs to the complex I 30 kDa subunit family. It in the C-terminal section; belongs to the complex I 49 kDa subunit family. As to quaternary structure, NDH-1 is composed of 13 different subunits. Subunits NuoB, CD, E, F, and G constitute the peripheral sector of the complex.

It is found in the cell inner membrane. It carries out the reaction a quinone + NADH + 5 H(+)(in) = a quinol + NAD(+) + 4 H(+)(out). Its function is as follows. NDH-1 shuttles electrons from NADH, via FMN and iron-sulfur (Fe-S) centers, to quinones in the respiratory chain. The immediate electron acceptor for the enzyme in this species is believed to be ubiquinone. Couples the redox reaction to proton translocation (for every two electrons transferred, four hydrogen ions are translocated across the cytoplasmic membrane), and thus conserves the redox energy in a proton gradient. The protein is NADH-quinone oxidoreductase subunit C/D of Sodalis glossinidius (strain morsitans).